Reading from the N-terminus, the 313-residue chain is MACSRARARAYSSAANLGPGFDALAVALDAYYDEVEVRVCSGGNSVYVDEVEGKFSSGVLQGPNTAAEAVRGLLNMEGVEAEVGIRVYKGVPPGRGLGSSGASAAAAVAAVSHALALEVPVDRLVFYAGLGERAAAGQPHFDNAAASILGGLAVVASDAAGKLRVFRVPFKAWFAVVTPMNPVPQGKTGVMRKVLPENVSFRDAVRNFSRAAGIVAAAVNGDLKSMGALMMSDEIVEPRRRSYVPCYTQVRKAALQAGALGFSLSGAGPSMIALAPSSEAAREIAAAMEESCICCDNPMTVAAEPAPGASVVG.

92-102 (PPGRGLGSSGA) is a binding site for ATP.

Belongs to the GHMP kinase family. Homoserine kinase subfamily.

It is found in the cytoplasm. The catalysed reaction is L-homoserine + ATP = O-phospho-L-homoserine + ADP + H(+). Its pathway is amino-acid biosynthesis; L-threonine biosynthesis; L-threonine from L-aspartate: step 4/5. In terms of biological role, catalyzes the ATP-dependent phosphorylation of L-homoserine to L-homoserine phosphate. In Aeropyrum pernix (strain ATCC 700893 / DSM 11879 / JCM 9820 / NBRC 100138 / K1), this protein is Homoserine kinase.